Here is a 241-residue protein sequence, read N- to C-terminus: Probable FKBP-type peptidyl-prolyl cis-trans isomerase (241 aa).

In terms of domain architecture, PPIase FKBP-type spans Thr150–Lys241.

Belongs to the FKBP-type PPIase family.

The enzyme catalyses [protein]-peptidylproline (omega=180) = [protein]-peptidylproline (omega=0). In terms of biological role, PPIases accelerate the folding of proteins. It catalyzes the cis-trans isomerization of proline imidic peptide bonds in oligopeptides. This chain is Probable FKBP-type peptidyl-prolyl cis-trans isomerase, found in Haemophilus influenzae (strain ATCC 51907 / DSM 11121 / KW20 / Rd).